The chain runs to 390 residues: tRNA(Met) cytidine acetate ligase (390 aa).

ATP is bound by residues 7 to 20, Gly-101, Asn-162, and Arg-187; that span reads VVEYNPFHNGHKLH.

It belongs to the TmcAL family.

It localises to the cytoplasm. The catalysed reaction is cytidine(34) in elongator tRNA(Met) + acetate + ATP = N(4)-acetylcytidine(34) in elongator tRNA(Met) + AMP + diphosphate. Catalyzes the formation of N(4)-acetylcytidine (ac(4)C) at the wobble position of elongator tRNA(Met), using acetate and ATP as substrates. First activates an acetate ion to form acetyladenylate (Ac-AMP) and then transfers the acetyl group to tRNA to form ac(4)C34. The chain is tRNA(Met) cytidine acetate ligase from Listeria monocytogenes serovar 1/2a (strain ATCC BAA-679 / EGD-e).